The primary structure comprises 281 residues: Pantothenate synthetase (281 aa).

ATP is bound at residue 30-37; the sequence is MGYLHEGH. The Proton donor role is filled by His37. Gln61 is a (R)-pantoate binding site. Gln61 is a binding site for beta-alanine. 147 to 150 contacts ATP; the sequence is GQKD. Gln153 is a binding site for (R)-pantoate. ATP is bound by residues Val176 and 184–187; that span reads MSSR.

It belongs to the pantothenate synthetase family. Homodimer.

It is found in the cytoplasm. The enzyme catalyses (R)-pantoate + beta-alanine + ATP = (R)-pantothenate + AMP + diphosphate + H(+). It participates in cofactor biosynthesis; (R)-pantothenate biosynthesis; (R)-pantothenate from (R)-pantoate and beta-alanine: step 1/1. Functionally, catalyzes the condensation of pantoate with beta-alanine in an ATP-dependent reaction via a pantoyl-adenylate intermediate. This Acetivibrio thermocellus (strain ATCC 27405 / DSM 1237 / JCM 9322 / NBRC 103400 / NCIMB 10682 / NRRL B-4536 / VPI 7372) (Clostridium thermocellum) protein is Pantothenate synthetase.